Here is a 290-residue protein sequence, read N- to C-terminus: 4-diphosphocytidyl-2-C-methyl-D-erythritol kinase (290 aa).

The active site involves lysine 13. 96 to 106 lines the ATP pocket; the sequence is PMGGGIGGGSS. Aspartate 138 is a catalytic residue.

The protein belongs to the GHMP kinase family. IspE subfamily.

It carries out the reaction 4-CDP-2-C-methyl-D-erythritol + ATP = 4-CDP-2-C-methyl-D-erythritol 2-phosphate + ADP + H(+). It participates in isoprenoid biosynthesis; isopentenyl diphosphate biosynthesis via DXP pathway; isopentenyl diphosphate from 1-deoxy-D-xylulose 5-phosphate: step 3/6. Catalyzes the phosphorylation of the position 2 hydroxy group of 4-diphosphocytidyl-2C-methyl-D-erythritol. The chain is 4-diphosphocytidyl-2-C-methyl-D-erythritol kinase from Vibrio campbellii (strain ATCC BAA-1116).